The following is a 161-amino-acid chain: ATP synthase subunit b 1 (161 aa).

A helical transmembrane segment spans residues 3 to 23; sequence LDATFYALVGLILFFVLIAYL.

The protein belongs to the ATPase B chain family. F-type ATPases have 2 components, F(1) - the catalytic core - and F(0) - the membrane proton channel. F(1) has five subunits: alpha(3), beta(3), gamma(1), delta(1), epsilon(1). F(0) has three main subunits: a(1), b(2) and c(10-14). The alpha and beta chains form an alternating ring which encloses part of the gamma chain. F(1) is attached to F(0) by a central stalk formed by the gamma and epsilon chains, while a peripheral stalk is formed by the delta and b chains.

Its subcellular location is the cell inner membrane. Functionally, f(1)F(0) ATP synthase produces ATP from ADP in the presence of a proton or sodium gradient. F-type ATPases consist of two structural domains, F(1) containing the extramembraneous catalytic core and F(0) containing the membrane proton channel, linked together by a central stalk and a peripheral stalk. During catalysis, ATP synthesis in the catalytic domain of F(1) is coupled via a rotary mechanism of the central stalk subunits to proton translocation. Component of the F(0) channel, it forms part of the peripheral stalk, linking F(1) to F(0). The polypeptide is ATP synthase subunit b 1 (Sinorhizobium medicae (strain WSM419) (Ensifer medicae)).